Consider the following 144-residue polypeptide: MIALIQRVSEAAVRVDGEVVGEIDTGLLVLLGVEKDDDEAKAKRLMERVTTYRVFEDDEGKMNLNVKQVNGKVLVVSQFTLPADTKKGTRAGFSRGAHPADAERLYDYFSDLCEQELPTERGRFAADMKVSLINDGPVTFWLQV.

The short motif at 136 to 137 (GP) is the Gly-cisPro motif, important for rejection of L-amino acids element.

Belongs to the DTD family. Homodimer.

The protein resides in the cytoplasm. It catalyses the reaction glycyl-tRNA(Ala) + H2O = tRNA(Ala) + glycine + H(+). The catalysed reaction is a D-aminoacyl-tRNA + H2O = a tRNA + a D-alpha-amino acid + H(+). In terms of biological role, an aminoacyl-tRNA editing enzyme that deacylates mischarged D-aminoacyl-tRNAs. Also deacylates mischarged glycyl-tRNA(Ala), protecting cells against glycine mischarging by AlaRS. Acts via tRNA-based rather than protein-based catalysis; rejects L-amino acids rather than detecting D-amino acids in the active site. By recycling D-aminoacyl-tRNA to D-amino acids and free tRNA molecules, this enzyme counteracts the toxicity associated with the formation of D-aminoacyl-tRNA entities in vivo and helps enforce protein L-homochirality. The protein is D-aminoacyl-tRNA deacylase of Vibrio parahaemolyticus serotype O3:K6 (strain RIMD 2210633).